We begin with the raw amino-acid sequence, 2442 residues long: Centrosome-associated protein CEP250 (2442 aa).

Coiled coils occupy residues 95–158, 244–352, 395–1172, and 1243–2227; these read NLDE…KESQ, AQLL…TQVM, LTRR…EQQP, and SALH…KERL. 2 stretches are compositionally biased toward basic and acidic residues: residues 1273–1289 and 1699–1715; these read LTDT…ELQD and LTTQ…EGKG. Disordered regions lie at residues 1273-1308, 1699-1725, and 1820-1839; these read LTDT…EGKQ, LTTQ…GSLE, and EALQ…VKEK. The segment covering 1820 to 1831 has biased composition (low complexity); the sequence is EALQQEQQQAQG. Serine 2138 carries the phosphoserine modification. Threonine 2218 is subject to Phosphothreonine. The segment at 2223–2244 is disordered; the sequence is EKERLHSPGATSTAELGSRGEQ. Residues serine 2229, serine 2252, and serine 2322 each carry the phosphoserine modification. A coiled-coil region spans residues 2262–2376; the sequence is GMEKQSWRQR…RKQKQDYITR (115 aa). 2 disordered regions span residues 2307–2345 and 2416–2442; these read RRKL…KNSD and ESLT…AASR. A compositionally biased stretch (polar residues) spans 2328 to 2338; sequence ATASSPTQQDG. Residues serine 2417 and serine 2421 each carry the phosphoserine; by NEK2 modification. Residues 2433–2442 show a composition bias toward polar residues; sequence SPSTTQAASR.

As to quaternary structure, monomer and homodimer. Forms a complex in vitro with both NEK2 kinase and the PPP1CC catalytic subunit of protein phosphatase 1 (PP1). Interacts with CEP135. Interacts with CROCC/rootletin. Interacts with CNTLN. Interacts with NIN (via C-terminus). Interacts with CCDC102B (via N-terminus); the interaction results in recruitment of CCDC102B to the proximal ends of centrioles. Post-translationally, differentially phosphorylated during cell cycle. Phosphorylation may regulate association/dissociation from centrosome. During M phase of mitosis, C-terminal part is phosphorylated by NEK2, suggesting that it may trigger the dissociation from the mitotic centrosome. Dephosphorylated in vitro by the PP1 phosphatase. As to expression, ubiquitously and weakly expressed.

Its subcellular location is the cytoplasm. The protein resides in the perinuclear region. It is found in the cytoskeleton. The protein localises to the microtubule organizing center. It localises to the centrosome. Its subcellular location is the centriole. The protein resides in the cilium basal body. It is found in the cell projection. The protein localises to the cilium. It localises to the photoreceptor outer segment. Its subcellular location is the photoreceptor inner segment. Functionally, plays an important role in centrosome cohesion during interphase. Recruits CCDC102B to the proximal ends of centrioles. Maintains centrosome cohesion by forming intercentriolar linkages. Accumulates at the proximal end of each centriole, forming supramolecular assemblies with viscous material properties that promote organelle cohesion. May be involved in ciliogenesis. The polypeptide is Centrosome-associated protein CEP250 (CEP250) (Homo sapiens (Human)).